Reading from the N-terminus, the 2353-residue chain is Nonribosomal peptide synthetase 7 (2353 aa).

The tract at residues 305-684 (TFSALNTRAN…AIEEVEDSAV (380 aa)) is adenylation 1. Positions 776–853 (RDLTDSEKVV…QVAAAVQPQP (78 aa)) constitute a Carrier 1 domain. Ser813 is subject to O-(pantetheine 4'-phosphoryl)serine. Residues 885–1147 (EDAFPVTPFQ…LMVAPLRVKV (263 aa)) are condensation 1. An adenylation 2 region spans residues 1338-1725 (TYAGLAIKMN…QTNVFRQCAV (388 aa)). In terms of domain architecture, Carrier 2 spans 1826–1902 (EICSEAEREL…EQAALMVQGQ (77 aa)). Ser1863 carries the post-translational modification O-(pantetheine 4'-phosphoryl)serine. Residues 1939–2214 (EDIYPCSPGQ…NGNCANFLPY (276 aa)) form a condensation 2 region.

The protein belongs to the NRP synthetase family.

Its function is as follows. Nonribosomal peptide synthesis (NRPS) is a key mechanism responsible for the biosynthesis of bioactive metabolites which are potentially contributing to organismal virulence. The protein is Nonribosomal peptide synthetase 7 (NRPS7) of Aspergillus fumigatus (strain ATCC MYA-4609 / CBS 101355 / FGSC A1100 / Af293) (Neosartorya fumigata).